Consider the following 115-residue polypeptide: DNA-binding protein STK_13740 (115 aa).

Belongs to the PDCD5 family.

This is DNA-binding protein STK_13740 from Sulfurisphaera tokodaii (strain DSM 16993 / JCM 10545 / NBRC 100140 / 7) (Sulfolobus tokodaii).